Reading from the N-terminus, the 320-residue chain is Acetyl-coenzyme A carboxylase carboxyl transferase subunit alpha (320 aa).

Positions 33–294 (AFDTEIQALR…GDAVEDELKA (262 aa)) constitute a CoA carboxyltransferase C-terminal domain.

It belongs to the AccA family. As to quaternary structure, acetyl-CoA carboxylase is a heterohexamer composed of biotin carboxyl carrier protein (AccB), biotin carboxylase (AccC) and two subunits each of ACCase subunit alpha (AccA) and ACCase subunit beta (AccD).

Its subcellular location is the cytoplasm. It carries out the reaction N(6)-carboxybiotinyl-L-lysyl-[protein] + acetyl-CoA = N(6)-biotinyl-L-lysyl-[protein] + malonyl-CoA. The protein operates within lipid metabolism; malonyl-CoA biosynthesis; malonyl-CoA from acetyl-CoA: step 1/1. Component of the acetyl coenzyme A carboxylase (ACC) complex. First, biotin carboxylase catalyzes the carboxylation of biotin on its carrier protein (BCCP) and then the CO(2) group is transferred by the carboxyltransferase to acetyl-CoA to form malonyl-CoA. The polypeptide is Acetyl-coenzyme A carboxylase carboxyl transferase subunit alpha (Caulobacter vibrioides (strain ATCC 19089 / CIP 103742 / CB 15) (Caulobacter crescentus)).